A 511-amino-acid chain; its full sequence is 2-isopropylmalate synthase (511 aa).

The segment covering 1-16 has biased composition (basic and acidic residues); that stretch reads MTRKIDIFDTTLRDGE. Residues 1–23 form a disordered region; the sequence is MTRKIDIFDTTLRDGEQSPGASM. A Pyruvate carboxyltransferase domain is found at 5 to 268; it reads IDIFDTTLRD…HTDVVTQELT (264 aa). Mn(2+)-binding residues include Asp-14, His-203, His-205, and Asn-239. A regulatory domain region spans residues 392–511; sequence ALESVQVVCG…IQTTRSKQGK (120 aa).

The protein belongs to the alpha-IPM synthase/homocitrate synthase family. LeuA type 1 subfamily. In terms of assembly, homodimer. Requires Mn(2+) as cofactor.

The protein resides in the cytoplasm. It carries out the reaction 3-methyl-2-oxobutanoate + acetyl-CoA + H2O = (2S)-2-isopropylmalate + CoA + H(+). The protein operates within amino-acid biosynthesis; L-leucine biosynthesis; L-leucine from 3-methyl-2-oxobutanoate: step 1/4. Functionally, catalyzes the condensation of the acetyl group of acetyl-CoA with 3-methyl-2-oxobutanoate (2-ketoisovalerate) to form 3-carboxy-3-hydroxy-4-methylpentanoate (2-isopropylmalate). The chain is 2-isopropylmalate synthase from Olsenella uli (strain ATCC 49627 / DSM 7084 / CCUG 31166 / CIP 109912 / JCM 12494 / LMG 11480 / NCIMB 702895 / VPI D76D-27C) (Lactobacillus uli).